A 115-amino-acid chain; its full sequence is MFSIIQKIEKEQIKKNIPIFRSGDTIEVKVWVIEGSKKRLQSFEGIVIAIKNRCLNSSFTVRKISNGEGVERVFQTHSHGIEEILVKRRGLVRKAKLYYLRTRTGKAARIKERLN.

Belongs to the bacterial ribosomal protein bL19 family.

In terms of biological role, this protein is located at the 30S-50S ribosomal subunit interface and may play a role in the structure and function of the aminoacyl-tRNA binding site. This Buchnera aphidicola subsp. Acyrthosiphon pisum (strain 5A) protein is Large ribosomal subunit protein bL19.